The sequence spans 279 residues: uncharacterized protein (279 aa).

This is an uncharacterized protein from Acanthamoeba polyphaga mimivirus (APMV).